Reading from the N-terminus, the 401-residue chain is S-adenosylmethionine synthase (401 aa).

His16 is a binding site for ATP. Asp18 lines the Mg(2+) pocket. Glu44 contributes to the K(+) binding site. Glu57 and Gln109 together coordinate L-methionine. Positions 109-119 are flexible loop; the sequence is QSAHIAQGVDA. Residues 174–176, Asp251, 257–258, Ala274, and Lys278 each bind ATP; these read DAK and RK. Asp251 is an L-methionine binding site. Lys282 contributes to the L-methionine binding site.

Belongs to the AdoMet synthase family. In terms of assembly, homotetramer; dimer of dimers. It depends on Mg(2+) as a cofactor. K(+) serves as cofactor.

It localises to the cytoplasm. It carries out the reaction L-methionine + ATP + H2O = S-adenosyl-L-methionine + phosphate + diphosphate. It functions in the pathway amino-acid biosynthesis; S-adenosyl-L-methionine biosynthesis; S-adenosyl-L-methionine from L-methionine: step 1/1. Functionally, catalyzes the formation of S-adenosylmethionine (AdoMet) from methionine and ATP. The overall synthetic reaction is composed of two sequential steps, AdoMet formation and the subsequent tripolyphosphate hydrolysis which occurs prior to release of AdoMet from the enzyme. The protein is S-adenosylmethionine synthase of Novosphingobium aromaticivorans (strain ATCC 700278 / DSM 12444 / CCUG 56034 / CIP 105152 / NBRC 16084 / F199).